A 662-amino-acid chain; its full sequence is UvrABC system protein B (662 aa).

In terms of domain architecture, Helicase ATP-binding spans 25–182; it reads KGIEKGEKFQ…KKLVEIQYER (158 aa). 38–45 is an ATP binding site; sequence GVTGSGKT. Residues 91–114 carry the Beta-hairpin motif; sequence YYDYYQPEAYVAQSDTYIEKDASI. In terms of domain architecture, Helicase C-terminal spans 429–595; sequence QIDDLYTSIQ…TIIKDIREVI (167 aa). Residues 622-657 enclose the UVR domain; that stretch reads DKLIEKYEEEMKEAAQNLQFEKAAHLRDVIYKLKRD.

Belongs to the UvrB family. Forms a heterotetramer with UvrA during the search for lesions. Interacts with UvrC in an incision complex.

The protein resides in the cytoplasm. In terms of biological role, the UvrABC repair system catalyzes the recognition and processing of DNA lesions. A damage recognition complex composed of 2 UvrA and 2 UvrB subunits scans DNA for abnormalities. Upon binding of the UvrA(2)B(2) complex to a putative damaged site, the DNA wraps around one UvrB monomer. DNA wrap is dependent on ATP binding by UvrB and probably causes local melting of the DNA helix, facilitating insertion of UvrB beta-hairpin between the DNA strands. Then UvrB probes one DNA strand for the presence of a lesion. If a lesion is found the UvrA subunits dissociate and the UvrB-DNA preincision complex is formed. This complex is subsequently bound by UvrC and the second UvrB is released. If no lesion is found, the DNA wraps around the other UvrB subunit that will check the other stand for damage. This is UvrABC system protein B from Clostridium botulinum (strain Loch Maree / Type A3).